We begin with the raw amino-acid sequence, 256 residues long: Deoxyribose-phosphate aldolase (256 aa).

Residue Asp102 is the Proton donor/acceptor of the active site. Lys165 serves as the catalytic Schiff-base intermediate with acetaldehyde. Lys197 (proton donor/acceptor) is an active-site residue.

Belongs to the DeoC/FbaB aldolase family. DeoC type 2 subfamily.

It is found in the cytoplasm. It catalyses the reaction 2-deoxy-D-ribose 5-phosphate = D-glyceraldehyde 3-phosphate + acetaldehyde. It functions in the pathway carbohydrate degradation; 2-deoxy-D-ribose 1-phosphate degradation; D-glyceraldehyde 3-phosphate and acetaldehyde from 2-deoxy-alpha-D-ribose 1-phosphate: step 2/2. Its function is as follows. Catalyzes a reversible aldol reaction between acetaldehyde and D-glyceraldehyde 3-phosphate to generate 2-deoxy-D-ribose 5-phosphate. This chain is Deoxyribose-phosphate aldolase, found in Shewanella baltica (strain OS223).